A 261-amino-acid polypeptide reads, in one-letter code: MAHQAHAYHMVDPSPWPLTGAIAALLLTSGTAVWFHFHSLTLLTLGNVLLLLTMYQWWRDIIREGTFQGHHTPPVQKGLRYGMILFITSEVFFFLGFFWAFYHASLAPTPELGGCWPPTGITTLDPFEVPLLNTAVLLASGVTVTWAHHSIMEGERKQTIQALTLTILLGFYFTFLQGMEYYEAPFTIADGVYGSTFFVATGFHGLHVIIGSTFLAVCLLRQVQYHFTSEHHFGFEAAAWYWHFVDVVWLFLYVSIYWWGS.

Over Met1–Pro15 the chain is Mitochondrial matrix. Residues Trp16–Trp34 form a helical membrane-spanning segment. The Mitochondrial intermembrane segment spans residues Phe35–Leu40. A helical transmembrane segment spans residues Thr41–Thr66. Residues Phe67 to Thr72 are Mitochondrial matrix-facing. Residues Pro73 to Ser105 form a helical membrane-spanning segment. Residues Leu106–Glu128 are Mitochondrial intermembrane-facing. Residues Val129–Met152 form a helical membrane-spanning segment. The Mitochondrial matrix portion of the chain corresponds to Glu153–Glu155. Residues Arg156–Glu183 traverse the membrane as a helical segment. Over Ala184 to Asp190 the chain is Mitochondrial intermembrane. The helical transmembrane segment at Gly191–Val223 threads the bilayer. The Mitochondrial matrix portion of the chain corresponds to Gln224 to His232. A helical transmembrane segment spans residues Phe233–Ile256. Over Tyr257–Ser261 the chain is Mitochondrial intermembrane.

The protein belongs to the cytochrome c oxidase subunit 3 family. Component of the cytochrome c oxidase (complex IV, CIV), a multisubunit enzyme composed of 14 subunits. The complex is composed of a catalytic core of 3 subunits MT-CO1, MT-CO2 and MT-CO3, encoded in the mitochondrial DNA, and 11 supernumerary subunits COX4I, COX5A, COX5B, COX6A, COX6B, COX6C, COX7A, COX7B, COX7C, COX8 and NDUFA4, which are encoded in the nuclear genome. The complex exists as a monomer or a dimer and forms supercomplexes (SCs) in the inner mitochondrial membrane with NADH-ubiquinone oxidoreductase (complex I, CI) and ubiquinol-cytochrome c oxidoreductase (cytochrome b-c1 complex, complex III, CIII), resulting in different assemblies (supercomplex SCI(1)III(2)IV(1) and megacomplex MCI(2)III(2)IV(2)).

The protein resides in the mitochondrion inner membrane. The catalysed reaction is 4 Fe(II)-[cytochrome c] + O2 + 8 H(+)(in) = 4 Fe(III)-[cytochrome c] + 2 H2O + 4 H(+)(out). Its function is as follows. Component of the cytochrome c oxidase, the last enzyme in the mitochondrial electron transport chain which drives oxidative phosphorylation. The respiratory chain contains 3 multisubunit complexes succinate dehydrogenase (complex II, CII), ubiquinol-cytochrome c oxidoreductase (cytochrome b-c1 complex, complex III, CIII) and cytochrome c oxidase (complex IV, CIV), that cooperate to transfer electrons derived from NADH and succinate to molecular oxygen, creating an electrochemical gradient over the inner membrane that drives transmembrane transport and the ATP synthase. Cytochrome c oxidase is the component of the respiratory chain that catalyzes the reduction of oxygen to water. Electrons originating from reduced cytochrome c in the intermembrane space (IMS) are transferred via the dinuclear copper A center (CU(A)) of subunit 2 and heme A of subunit 1 to the active site in subunit 1, a binuclear center (BNC) formed by heme A3 and copper B (CU(B)). The BNC reduces molecular oxygen to 2 water molecules using 4 electrons from cytochrome c in the IMS and 4 protons from the mitochondrial matrix. The chain is Cytochrome c oxidase subunit 3 (mt-co3) from Oncorhynchus masou (Cherry salmon).